The primary structure comprises 460 residues: Putative protein p41 (460 aa).

A Helicase ATP-binding domain is found at 14–186; the sequence is INHLLDIKRS…WGQAWFVDQG (173 aa).

The protein is Putative protein p41 (41) of Escherichia coli (Bacteriophage APSE-1).